A 913-amino-acid chain; its full sequence is DNA mismatch repair protein MutS (913 aa).

Positions 18–50 are disordered; it reads NNKQKEKTKIPEDLSLEDLKKESQKRPRQRKNS. A compositionally biased stretch (basic and acidic residues) spans 19–42; the sequence is NKQKEKTKIPEDLSLEDLKKESQK. Position 720–727 (720–727) interacts with ATP; it reads GPNASGKS.

The protein belongs to the DNA mismatch repair MutS family.

This protein is involved in the repair of mismatches in DNA. It is possible that it carries out the mismatch recognition step. This protein has a weak ATPase activity. This is DNA mismatch repair protein MutS from Prochlorococcus marinus (strain MIT 9301).